We begin with the raw amino-acid sequence, 146 residues long: UPF0260 protein Swoo_2117 (146 aa).

Belongs to the UPF0260 family.

The protein is UPF0260 protein Swoo_2117 of Shewanella woodyi (strain ATCC 51908 / MS32).